We begin with the raw amino-acid sequence, 157 residues long: Phosphopantetheine adenylyltransferase (157 aa).

Position 10 (Thr10) interacts with substrate. ATP-binding positions include 10–11 and His18; that span reads TF. 3 residues coordinate substrate: Lys42, Leu74, and Arg88. Residues 89–91, Glu99, and 124–130 each bind ATP; these read GLR and NAFISSS.

This sequence belongs to the bacterial CoaD family. As to quaternary structure, homohexamer. Mg(2+) is required as a cofactor.

It is found in the cytoplasm. The catalysed reaction is (R)-4'-phosphopantetheine + ATP + H(+) = 3'-dephospho-CoA + diphosphate. Its pathway is cofactor biosynthesis; coenzyme A biosynthesis; CoA from (R)-pantothenate: step 4/5. In terms of biological role, reversibly transfers an adenylyl group from ATP to 4'-phosphopantetheine, yielding dephospho-CoA (dPCoA) and pyrophosphate. This is Phosphopantetheine adenylyltransferase from Helicobacter acinonychis (strain Sheeba).